The sequence spans 541 residues: Glutamyl-tRNA(Gln) amidotransferase subunit B, mitochondrial (541 aa).

Belongs to the GatB/GatE family. GatB subfamily. As to quaternary structure, subunit of the heterotrimeric GatFAB amidotransferase (AdT) complex, composed of A, B and F subunits.

It is found in the mitochondrion. The enzyme catalyses L-glutamyl-tRNA(Gln) + L-glutamine + ATP + H2O = L-glutaminyl-tRNA(Gln) + L-glutamate + ADP + phosphate + H(+). In terms of biological role, allows the formation of correctly charged Gln-tRNA(Gln) through the transamidation of misacylated Glu-tRNA(Gln) in the mitochondria. The reaction takes place in the presence of glutamine and ATP through an activated gamma-phospho-Glu-tRNA(Gln). This chain is Glutamyl-tRNA(Gln) amidotransferase subunit B, mitochondrial, found in Saccharomyces cerevisiae (strain RM11-1a) (Baker's yeast).